Here is a 317-residue protein sequence, read N- to C-terminus: Ribosomal RNA small subunit methyltransferase H (317 aa).

Residues 34 to 36, Asp-53, Phe-80, Asp-98, and Gln-105 each bind S-adenosyl-L-methionine; that span reads GGH.

It belongs to the methyltransferase superfamily. RsmH family.

The protein localises to the cytoplasm. It carries out the reaction cytidine(1402) in 16S rRNA + S-adenosyl-L-methionine = N(4)-methylcytidine(1402) in 16S rRNA + S-adenosyl-L-homocysteine + H(+). Functionally, specifically methylates the N4 position of cytidine in position 1402 (C1402) of 16S rRNA. This chain is Ribosomal RNA small subunit methyltransferase H, found in Tropheryma whipplei (strain TW08/27) (Whipple's bacillus).